Reading from the N-terminus, the 167-residue chain is Small ribosomal subunit protein uS9 (167 aa).

Residues 136–167 form a disordered region; sequence KRAGFLTRDPRATERKKYGLKKARKAPQYSKR. Over residues 143-152 the composition is skewed to basic and acidic residues; the sequence is RDPRATERKK. Over residues 153–167 the composition is skewed to basic residues; that stretch reads YGLKKARKAPQYSKR.

It belongs to the universal ribosomal protein uS9 family.

The polypeptide is Small ribosomal subunit protein uS9 (Nocardia farcinica (strain IFM 10152)).